A 472-amino-acid chain; its full sequence is Glycogen synthase (472 aa).

Lys-16 is a binding site for ADP-alpha-D-glucose.

It belongs to the glycosyltransferase 1 family. Bacterial/plant glycogen synthase subfamily.

It catalyses the reaction [(1-&gt;4)-alpha-D-glucosyl](n) + ADP-alpha-D-glucose = [(1-&gt;4)-alpha-D-glucosyl](n+1) + ADP + H(+). Its pathway is glycan biosynthesis; glycogen biosynthesis. Synthesizes alpha-1,4-glucan chains using ADP-glucose. This is Glycogen synthase from Jannaschia sp. (strain CCS1).